Here is a 104-residue protein sequence, read N- to C-terminus: Large ribosomal subunit protein bL21 (104 aa).

Belongs to the bacterial ribosomal protein bL21 family. In terms of assembly, part of the 50S ribosomal subunit. Contacts protein L20.

This protein binds to 23S rRNA in the presence of protein L20. This chain is Large ribosomal subunit protein bL21, found in Clostridium botulinum (strain Kyoto / Type A2).